A 181-amino-acid polypeptide reads, in one-letter code: Adenylate kinase (181 aa).

An ATP-binding site is contributed by 10 to 15 (GAGKGT). Residues 30–59 (STGDLFRDNITNETELGVEAKRYLDAGDLV) are NMP. AMP contacts are provided by residues Thr31, Arg36, 57–59 (DLV), 85–88 (GYPR), and Gln92. The LID stretch occupies residues 126–132 (GRGRADD). Residue Arg127 coordinates ATP. The AMP site is built by Arg129 and Arg140. Position 166 (Gly166) interacts with ATP.

This sequence belongs to the adenylate kinase family. In terms of assembly, monomer.

It is found in the cytoplasm. It catalyses the reaction AMP + ATP = 2 ADP. The protein operates within purine metabolism; AMP biosynthesis via salvage pathway; AMP from ADP: step 1/1. Catalyzes the reversible transfer of the terminal phosphate group between ATP and AMP. Plays an important role in cellular energy homeostasis and in adenine nucleotide metabolism. In Mycobacterium sp. (strain MCS), this protein is Adenylate kinase.